Reading from the N-terminus, the 218-residue chain is Putative glutamine transport system permease protein GlnP (218 aa).

Positions 19 to 208 constitute an ABC transmembrane type-1 domain; it reads TLITLKYSVI…ILVMLISFIA (190 aa). 4 consecutive transmembrane segments (helical) span residues 25 to 45, 57 to 79, 86 to 108, and 187 to 207; these read YSVI…LCKV, FYTS…FASP, FTVF…SEVI, and FFPM…ISFI.

Belongs to the binding-protein-dependent transport system permease family. HisMQ subfamily.

The protein localises to the cell inner membrane. In terms of biological role, part of the binding-protein-dependent transport system for glutamine; probably responsible for the translocation of the substrate across the membrane. The protein is Putative glutamine transport system permease protein GlnP (glnP) of Rickettsia bellii (strain RML369-C).